A 417-amino-acid chain; its full sequence is MRDDQIFNLIEKEKLREKEHIELIASENFTSLEIRQAVGSVLTNKYAEGYPLNRYYGGCSFIDEIETLAILRAKELFGAKYANVQPHSGSQANMAAIMALINPGDRILGMQLSHGGHLTHGSRVNFSGIFFNTYFYGVSRDSELIDYDEVLKIARDCRPNLIIAGASSYSREIDFKKFREIADDVSAYLLCDIAHIAGLIVAGFHNSSIDVAHLTTSTTHKTLRGPRGGIILSGKDFNKLVTFNGKEKTLSNAVNSTVFPGTQGGPLVHVIAGKAIAFREALQENFKEYISKVIKNTKVMAEYFKSEGFRIVSGGTDNHLFLVDLSSLDLTGADAEKLLERVNITLNKNAIPFDKKSPALASGIRIGGAAITSRGLNESDSLNVAKFIVRALKTRSDIELKQIKKEVVRFIRDFDMP.

(6S)-5,6,7,8-tetrahydrofolate is bound by residues leucine 112 and 116–118 (GHL). An N6-(pyridoxal phosphate)lysine modification is found at lysine 221. Residue glutamate 247 coordinates (6S)-5,6,7,8-tetrahydrofolate.

This sequence belongs to the SHMT family. In terms of assembly, homodimer. Pyridoxal 5'-phosphate is required as a cofactor.

It localises to the cytoplasm. The catalysed reaction is (6R)-5,10-methylene-5,6,7,8-tetrahydrofolate + glycine + H2O = (6S)-5,6,7,8-tetrahydrofolate + L-serine. It functions in the pathway one-carbon metabolism; tetrahydrofolate interconversion. The protein operates within amino-acid biosynthesis; glycine biosynthesis; glycine from L-serine: step 1/1. Functionally, catalyzes the reversible interconversion of serine and glycine with tetrahydrofolate (THF) serving as the one-carbon carrier. This reaction serves as the major source of one-carbon groups required for the biosynthesis of purines, thymidylate, methionine, and other important biomolecules. Also exhibits THF-independent aldolase activity toward beta-hydroxyamino acids, producing glycine and aldehydes, via a retro-aldol mechanism. The polypeptide is Serine hydroxymethyltransferase (Borreliella afzelii (strain PKo) (Borrelia afzelii)).